The sequence spans 312 residues: tRNA (adenine(58)-N(1))-methyltransferase catalytic subunit trmt61a (312 aa).

S-adenosyl-L-methionine contacts are provided by residues Leu-85, 112-114 (SGS), Glu-133, Arg-138, 161-162 (DA), and Asp-183.

This sequence belongs to the class I-like SAM-binding methyltransferase superfamily. TRM61 family. Heterotetramer; composed of two copies of trmt6 and two copies of trmt61a.

Its subcellular location is the nucleus. The enzyme catalyses adenosine(58) in tRNA + S-adenosyl-L-methionine = N(1)-methyladenosine(58) in tRNA + S-adenosyl-L-homocysteine + H(+). Inhibited by calcium and magnesium ions and spermidine. Enhanced by KCl, NaCl and NH(4)Cl in concentrations from 0.1-0.25 M. Concentrations of more than 0.3 M are inhibitory. In terms of biological role, catalytic subunit of tRNA (adenine-N(1)-)-methyltransferase, which catalyzes the formation of N(1)-methyladenine at position 58 (m1A58) in initiator methionyl-tRNA. This is tRNA (adenine(58)-N(1))-methyltransferase catalytic subunit trmt61a (trmt61a) from Dictyostelium discoideum (Social amoeba).